A 265-amino-acid polypeptide reads, in one-letter code: Cytosolic Fe-S cluster assembly factor NUBP2 homolog (265 aa).

22 to 29 is a binding site for ATP; the sequence is GKGGVGKS. Residues Cys-196 and Cys-199 each coordinate [4Fe-4S] cluster.

Belongs to the Mrp/NBP35 ATP-binding proteins family. NUBP2/CFD1 subfamily. In terms of assembly, heterotetramer of 2 NUBP1 and 2 NUBP2 chains. The cofactor is [4Fe-4S] cluster.

Its subcellular location is the cytoplasm. Component of the cytosolic iron-sulfur (Fe/S) protein assembly (CIA) machinery. Required for maturation of extramitochondrial Fe-S proteins. The NUBP1-NUBP2 heterotetramer forms a Fe-S scaffold complex, mediating the de novo assembly of an Fe-S cluster and its transfer to target apoproteins. The polypeptide is Cytosolic Fe-S cluster assembly factor NUBP2 homolog (Trichoplax adhaerens (Trichoplax reptans)).